Here is a 179-residue protein sequence, read N- to C-terminus: Large ribosomal subunit protein uL5 (179 aa).

This sequence belongs to the universal ribosomal protein uL5 family. As to quaternary structure, part of the 50S ribosomal subunit; part of the 5S rRNA/L5/L18/L25 subcomplex. Contacts the 5S rRNA and the P site tRNA. Forms a bridge to the 30S subunit in the 70S ribosome.

This is one of the proteins that bind and probably mediate the attachment of the 5S RNA into the large ribosomal subunit, where it forms part of the central protuberance. In the 70S ribosome it contacts protein S13 of the 30S subunit (bridge B1b), connecting the 2 subunits; this bridge is implicated in subunit movement. Contacts the P site tRNA; the 5S rRNA and some of its associated proteins might help stabilize positioning of ribosome-bound tRNAs. This Rickettsia bellii (strain OSU 85-389) protein is Large ribosomal subunit protein uL5.